We begin with the raw amino-acid sequence, 579 residues long: Pre-mRNA-processing factor 17 (579 aa).

The span at Met-1 to Glu-19 shows a compositional bias: low complexity. 2 disordered regions span residues Met-1–Lys-47 and Asp-204–Glu-237. Ser-46 carries the post-translational modification Phosphoserine. 7 WD repeats span residues Gly-286–Arg-326, Gly-330–Arg-369, Thr-371–Glu-413, Arg-416–Tyr-455, Pro-459–Lys-498, Gly-504–Arg-545, and Ala-548–Trp-578.

In terms of assembly, component of the pre-catalytic and catalytic spliceosome complexes. Component of the postcatalytic spliceosome P complex. Interacts with PPIL1; this interaction leads to CDC40 isomerization. In terms of processing, undergoes isomerization of the peptide bond between Gly-94 and Pro-95. The reaction is catalyzed by PPIL1.

The protein resides in the nucleus. It is found in the nucleus speckle. Its function is as follows. Required for pre-mRNA splicing as component of the activated spliceosome. Plays an important role in embryonic brain development; this function does not require proline isomerization. The protein is Pre-mRNA-processing factor 17 (CDC40) of Homo sapiens (Human).